The following is a 159-amino-acid chain: Ribosomal RNA large subunit methyltransferase H (159 aa).

S-adenosyl-L-methionine contacts are provided by residues Gly-108 and 127–132 (FGKLTM).

Belongs to the RNA methyltransferase RlmH family. Homodimer.

The protein resides in the cytoplasm. It carries out the reaction pseudouridine(1915) in 23S rRNA + S-adenosyl-L-methionine = N(3)-methylpseudouridine(1915) in 23S rRNA + S-adenosyl-L-homocysteine + H(+). Specifically methylates the pseudouridine at position 1915 (m3Psi1915) in 23S rRNA. The polypeptide is Ribosomal RNA large subunit methyltransferase H (Lactobacillus helveticus (strain DPC 4571)).